Reading from the N-terminus, the 425-residue chain is MAKQIQAIRGMNDILPTQSPLWQKVEAVLRASVAAYGYSEIRTPIVENTDLFKRSIGEVTDIVEKEMYTFEDRNGDSLTLRPEGTASTVRAGNEHGLLYNQEQRLWYMGPMFRHERPQKGRYRQFHQFGVEVYGIGSADIDAEVLMLSARLWEKLGISEHVTLELNTLGDPAERAAYREALIAFLEQHKDKLDEDSQRRMYSNPLRVLDSKDPQVQSILGDAPALMDYLGQESSQHFAQLRELLDAVGIQYRVNPRLVRGLDYYNRTVFEWVTNSLGSQGTVLAGGRYDGLVAQLGGKDTPAVGFAMGLERIVLLLETLELTQDIPAAVDVYVAAMGDSCLVEAIKVAQELRSTLPTLRVMSHCGGGNFKKQIKRADKSGAQVALLIGEEELAEGVVTVKYLRNDNEQQRVARNALSAFLAELTK.

This sequence belongs to the class-II aminoacyl-tRNA synthetase family. As to quaternary structure, homodimer.

The protein localises to the cytoplasm. It catalyses the reaction tRNA(His) + L-histidine + ATP = L-histidyl-tRNA(His) + AMP + diphosphate + H(+). This is Histidine--tRNA ligase from Shewanella sp. (strain MR-7).